A 663-amino-acid polypeptide reads, in one-letter code: DNA ligase 1 (663 aa).

Residues 28-32 (DKEYD) and 76-77 (SL) contribute to the NAD(+) site. The active-site N6-AMP-lysine intermediate is the Lys-118. NAD(+) is bound by residues Arg-139, Glu-173, and Lys-310. Residues Cys-403, Cys-406, Cys-419, and Cys-425 each contribute to the Zn(2+) site. One can recognise a BRCT domain in the interval 583–663 (VSESVFNDKT…KFEELIESVK (81 aa)).

The protein belongs to the NAD-dependent DNA ligase family. LigA subfamily. Mg(2+) is required as a cofactor. Requires Mn(2+) as cofactor.

The catalysed reaction is NAD(+) + (deoxyribonucleotide)n-3'-hydroxyl + 5'-phospho-(deoxyribonucleotide)m = (deoxyribonucleotide)n+m + AMP + beta-nicotinamide D-nucleotide.. In terms of biological role, DNA ligase that catalyzes the formation of phosphodiester linkages between 5'-phosphoryl and 3'-hydroxyl groups in double-stranded DNA using NAD as a coenzyme and as the energy source for the reaction. It is essential for DNA replication and repair of damaged DNA. This is DNA ligase 1 from Clostridium acetobutylicum (strain ATCC 824 / DSM 792 / JCM 1419 / IAM 19013 / LMG 5710 / NBRC 13948 / NRRL B-527 / VKM B-1787 / 2291 / W).